Reading from the N-terminus, the 192-residue chain is Fe/S biogenesis protein NfuA (192 aa).

2 residues coordinate [4Fe-4S] cluster: Cys-150 and Cys-153.

Belongs to the NfuA family. As to quaternary structure, homodimer. Requires [4Fe-4S] cluster as cofactor.

Functionally, involved in iron-sulfur cluster biogenesis. Binds a 4Fe-4S cluster, can transfer this cluster to apoproteins, and thereby intervenes in the maturation of Fe/S proteins. Could also act as a scaffold/chaperone for damaged Fe/S proteins. This is Fe/S biogenesis protein NfuA from Ruthia magnifica subsp. Calyptogena magnifica.